A 151-amino-acid chain; its full sequence is Nascent polypeptide-associated complex subunit beta (151 aa).

Disordered stretches follow at residues 1–38 (MDPSKLAKLQAGARIGGKGTPRRKVKKPSKSAMSAADD) and 123–151 (KVSEGEKGADAQADDGEIPDLVEKFDEQD). Basic residues predominate over residues 20-29 (TPRRKVKKPS). Residues 35–100 (AADDKKVQGA…AEEKTLSEIL (66 aa)) enclose the NAC-A/B domain.

This sequence belongs to the NAC-beta family. In terms of assembly, part of the nascent polypeptide-associated complex (NAC), consisting of ucp15 and btf3. NAC associates with ribosomes via btf3.

The protein resides in the cytoplasm. It localises to the nucleus. Functionally, component of the nascent polypeptide-associated complex (NAC), a dynamic component of the ribosomal exit tunnel, protecting the emerging polypeptides from interaction with other cytoplasmic proteins to ensure appropriate nascent protein targeting. The NAC complex also promotes mitochondrial protein import by enhancing productive ribosome interactions with the outer mitochondrial membrane and blocks the inappropriate interaction of ribosomes translating non-secretory nascent polypeptides with translocation sites in the membrane of the endoplasmic reticulum. EGD1 may act as a transcription factor that exert a negative effect on the expression of several genes that are transcribed by RNA polymerase II. This Schizosaccharomyces pombe (strain 972 / ATCC 24843) (Fission yeast) protein is Nascent polypeptide-associated complex subunit beta (btf3).